A 637-amino-acid chain; its full sequence is 1-deoxy-D-xylulose-5-phosphate synthase (637 aa).

Thiamine diphosphate contacts are provided by residues H76 and 117-119 (GHS). D148 is a Mg(2+) binding site. Residues 149–150 (GA), N177, Y294, and E381 contribute to the thiamine diphosphate site. Mg(2+) is bound at residue N177.

It belongs to the transketolase family. DXPS subfamily. As to quaternary structure, homodimer. It depends on Mg(2+) as a cofactor. The cofactor is thiamine diphosphate.

The enzyme catalyses D-glyceraldehyde 3-phosphate + pyruvate + H(+) = 1-deoxy-D-xylulose 5-phosphate + CO2. The protein operates within metabolic intermediate biosynthesis; 1-deoxy-D-xylulose 5-phosphate biosynthesis; 1-deoxy-D-xylulose 5-phosphate from D-glyceraldehyde 3-phosphate and pyruvate: step 1/1. Its function is as follows. Catalyzes the acyloin condensation reaction between C atoms 2 and 3 of pyruvate and glyceraldehyde 3-phosphate to yield 1-deoxy-D-xylulose-5-phosphate (DXP). This is 1-deoxy-D-xylulose-5-phosphate synthase from Neisseria gonorrhoeae (strain NCCP11945).